Here is a 203-residue protein sequence, read N- to C-terminus: Outer-membrane lipoprotein LolB (203 aa).

Residues 1 to 18 form the signal peptide; it reads MTLRSFLILLLSSIVLAG. Cysteine 19 carries N-palmitoyl cysteine lipidation. Cysteine 19 carries the S-diacylglycerol cysteine lipid modification.

The protein belongs to the LolB family. In terms of assembly, monomer.

The protein localises to the cell outer membrane. Functionally, plays a critical role in the incorporation of lipoproteins in the outer membrane after they are released by the LolA protein. In Vibrio campbellii (strain ATCC BAA-1116), this protein is Outer-membrane lipoprotein LolB.